The chain runs to 355 residues: UDP-N-acetylglucosamine--N-acetylmuramyl-(pentapeptide) pyrophosphoryl-undecaprenol N-acetylglucosamine transferase (355 aa).

UDP-N-acetyl-alpha-D-glucosamine contacts are provided by residues 13-15 (TGG), Asn125, Arg162, Ser190, Ile244, and Gln289.

The protein belongs to the glycosyltransferase 28 family. MurG subfamily.

The protein localises to the cell inner membrane. The catalysed reaction is di-trans,octa-cis-undecaprenyl diphospho-N-acetyl-alpha-D-muramoyl-L-alanyl-D-glutamyl-meso-2,6-diaminopimeloyl-D-alanyl-D-alanine + UDP-N-acetyl-alpha-D-glucosamine = di-trans,octa-cis-undecaprenyl diphospho-[N-acetyl-alpha-D-glucosaminyl-(1-&gt;4)]-N-acetyl-alpha-D-muramoyl-L-alanyl-D-glutamyl-meso-2,6-diaminopimeloyl-D-alanyl-D-alanine + UDP + H(+). It participates in cell wall biogenesis; peptidoglycan biosynthesis. Functionally, cell wall formation. Catalyzes the transfer of a GlcNAc subunit on undecaprenyl-pyrophosphoryl-MurNAc-pentapeptide (lipid intermediate I) to form undecaprenyl-pyrophosphoryl-MurNAc-(pentapeptide)GlcNAc (lipid intermediate II). This Neisseria meningitidis serogroup C / serotype 2a (strain ATCC 700532 / DSM 15464 / FAM18) protein is UDP-N-acetylglucosamine--N-acetylmuramyl-(pentapeptide) pyrophosphoryl-undecaprenol N-acetylglucosamine transferase.